A 301-amino-acid polypeptide reads, in one-letter code: UDP-3-O-acyl-N-acetylglucosamine deacetylase (301 aa).

Zn(2+) is bound by residues His-75, His-233, and Asp-237. His-260 functions as the Proton donor in the catalytic mechanism.

Belongs to the LpxC family. It depends on Zn(2+) as a cofactor.

The catalysed reaction is a UDP-3-O-[(3R)-3-hydroxyacyl]-N-acetyl-alpha-D-glucosamine + H2O = a UDP-3-O-[(3R)-3-hydroxyacyl]-alpha-D-glucosamine + acetate. Its pathway is glycolipid biosynthesis; lipid IV(A) biosynthesis; lipid IV(A) from (3R)-3-hydroxytetradecanoyl-[acyl-carrier-protein] and UDP-N-acetyl-alpha-D-glucosamine: step 2/6. Catalyzes the hydrolysis of UDP-3-O-myristoyl-N-acetylglucosamine to form UDP-3-O-myristoylglucosamine and acetate, the committed step in lipid A biosynthesis. The polypeptide is UDP-3-O-acyl-N-acetylglucosamine deacetylase (Aliarcobacter butzleri (strain RM4018) (Arcobacter butzleri)).